Reading from the N-terminus, the 126-residue chain is Holo-[acyl-carrier-protein] synthase (126 aa).

Mg(2+) contacts are provided by Asp-9 and Glu-59.

Belongs to the P-Pant transferase superfamily. AcpS family. Requires Mg(2+) as cofactor.

The protein localises to the cytoplasm. It carries out the reaction apo-[ACP] + CoA = holo-[ACP] + adenosine 3',5'-bisphosphate + H(+). In terms of biological role, transfers the 4'-phosphopantetheine moiety from coenzyme A to a Ser of acyl-carrier-protein. This Myxococcus xanthus (strain DK1622) protein is Holo-[acyl-carrier-protein] synthase.